A 219-amino-acid chain; its full sequence is Agamous-like MADS-box protein AGL19 (219 aa).

The MADS-box domain maps to 1–61 (MVRGKTEMKR…SKLYEFSSSS (61 aa)). The interval 77–96 (GNNHKRNDNSQQARDETSGL) is disordered. In terms of domain architecture, K-box spans 86–176 (SQQARDETSG…KEKWLGMGTA (91 aa)).

In terms of assembly, interacts with SOC1 and AGL21. As to expression, mostly expressed in the outer layers of the root meristem (lateral root cap and epidermis) and in the central cylinder cells of mature roots. Also present in rosette leaves and seedlings and, to a lesser extent, in cauline leaves and flowers. Enriched in apices including the shoot apical meristem and developing leaf primordia.

It localises to the nucleus. Probable transcription factor that promotes flowering, especially in response to vernalization by short periods of cold, in an FLC-inpedendent manner. In Arabidopsis thaliana (Mouse-ear cress), this protein is Agamous-like MADS-box protein AGL19 (AGL19).